The sequence spans 626 residues: DNA primase (626 aa).

The CHC2-type zinc-finger motif lies at 39–63 (CPFHGEKTPSFSVSPEKQIFHCFGC). The 83-residue stretch at 264–346 (EEITLMEGFM…DVFVLQLPAG (83 aa)) folds into the Toprim domain. Positions 270, 314, and 316 each coordinate Mg(2+).

Belongs to the DnaG primase family. Monomer. Interacts with DnaB. It depends on Zn(2+) as a cofactor. The cofactor is Mg(2+).

The catalysed reaction is ssDNA + n NTP = ssDNA/pppN(pN)n-1 hybrid + (n-1) diphosphate.. In terms of biological role, RNA polymerase that catalyzes the synthesis of short RNA molecules used as primers for DNA polymerase during DNA replication. This is DNA primase from Listeria innocua serovar 6a (strain ATCC BAA-680 / CLIP 11262).